Here is a 583-residue protein sequence, read N- to C-terminus: Probable lysosomal cobalamin transporter (583 aa).

A run of 10 helical transmembrane segments spans residues 8-28 (LIWA…SVFI), 41-61 (VILT…LVPV), 95-115 (IVYY…IPFI), 145-165 (TVSF…VPVA), 188-208 (ALTF…VLYT), 312-332 (LLSG…MLLT), 347-367 (GYIL…VQSA), 375-395 (VIFT…ISAV), 418-438 (LLAT…TSMI), and 506-526 (FFGA…LLVM). Acidic residues predominate over residues 541–552 (LDEDAEEAEEES). Positions 541-562 (LDEDAEEAEEESLLANTRGRAE) are disordered.

Belongs to the LIMR family. LMBRD1 subfamily.

The protein resides in the lysosome membrane. Its function is as follows. Probable lysosomal cobalamin transporter. Required to export cobalamin from lysosomes allowing its conversion to cofactors. This Aspergillus oryzae (strain ATCC 42149 / RIB 40) (Yellow koji mold) protein is Probable lysosomal cobalamin transporter.